We begin with the raw amino-acid sequence, 304 residues long: Acetyl-coenzyme A carboxylase carboxyl transferase subunit beta (304 aa).

In terms of domain architecture, CoA carboxyltransferase N-terminal spans 23–292; it reads VWTKCDSCGQ…PNPEAPREGV (270 aa). Positions 27, 30, 46, and 49 each coordinate Zn(2+). The C4-type zinc-finger motif lies at 27-49; sequence CDSCGQVLYRAELERNLEVCPKC. The disordered stretch occupies residues 284 to 304; that stretch reads NPEAPREGVVVPPVPDQEPEA. A compositionally biased stretch (pro residues) spans 295–304; the sequence is PPVPDQEPEA.

This sequence belongs to the AccD/PCCB family. Acetyl-CoA carboxylase is a heterohexamer composed of biotin carboxyl carrier protein (AccB), biotin carboxylase (AccC) and two subunits each of ACCase subunit alpha (AccA) and ACCase subunit beta (AccD). It depends on Zn(2+) as a cofactor.

It localises to the cytoplasm. The catalysed reaction is N(6)-carboxybiotinyl-L-lysyl-[protein] + acetyl-CoA = N(6)-biotinyl-L-lysyl-[protein] + malonyl-CoA. It participates in lipid metabolism; malonyl-CoA biosynthesis; malonyl-CoA from acetyl-CoA: step 1/1. Component of the acetyl coenzyme A carboxylase (ACC) complex. Biotin carboxylase (BC) catalyzes the carboxylation of biotin on its carrier protein (BCCP) and then the CO(2) group is transferred by the transcarboxylase to acetyl-CoA to form malonyl-CoA. This is Acetyl-coenzyme A carboxylase carboxyl transferase subunit beta from Shigella flexneri serotype 5b (strain 8401).